Consider the following 476-residue polypeptide: UDP-N-acetylmuramate--L-alanine ligase (476 aa).

ATP is bound at residue 107–113 (GTHGKTT).

This sequence belongs to the MurCDEF family.

The protein resides in the cytoplasm. It carries out the reaction UDP-N-acetyl-alpha-D-muramate + L-alanine + ATP = UDP-N-acetyl-alpha-D-muramoyl-L-alanine + ADP + phosphate + H(+). It functions in the pathway cell wall biogenesis; peptidoglycan biosynthesis. Cell wall formation. This chain is UDP-N-acetylmuramate--L-alanine ligase, found in Roseiflexus castenholzii (strain DSM 13941 / HLO8).